The following is a 114-amino-acid chain: uncharacterized protein (114 aa).

The next 2 helical transmembrane spans lie at 9–29 (LAIF…SFWL) and 75–95 (LVHF…VAII).

The protein resides in the cell membrane. This is an uncharacterized protein from Mycoplasma pneumoniae (strain ATCC 29342 / M129 / Subtype 1) (Mycoplasmoides pneumoniae).